We begin with the raw amino-acid sequence, 133 residues long: MSKVVHTSGKRKTAIARGTVKEGTGRVKVNRKPVELYEPELARLKIFEPLELAGDIVNSVDINVRVVGGGIMGQAEAARMVIAKGLVEYTGDMNLKDRYVQYDRTMLVGDPRRSESKKFGGPGARARKQKSYR.

The disordered stretch occupies residues 111 to 133; sequence PRRSESKKFGGPGARARKQKSYR.

It belongs to the universal ribosomal protein uS9 family.

The protein is Small ribosomal subunit protein uS9 of Methanosphaera stadtmanae (strain ATCC 43021 / DSM 3091 / JCM 11832 / MCB-3).